The primary structure comprises 290 residues: Ribosomal protein L11 methyltransferase (290 aa).

S-adenosyl-L-methionine contacts are provided by Thr-135, Gly-158, Asp-180, and Asn-227.

The protein belongs to the methyltransferase superfamily. PrmA family.

It is found in the cytoplasm. The enzyme catalyses L-lysyl-[protein] + 3 S-adenosyl-L-methionine = N(6),N(6),N(6)-trimethyl-L-lysyl-[protein] + 3 S-adenosyl-L-homocysteine + 3 H(+). Its function is as follows. Methylates ribosomal protein L11. This chain is Ribosomal protein L11 methyltransferase, found in Mesorhizobium japonicum (strain LMG 29417 / CECT 9101 / MAFF 303099) (Mesorhizobium loti (strain MAFF 303099)).